A 552-amino-acid chain; its full sequence is Protein TRM32 (552 aa).

The disordered stretch occupies residues 295 to 379 (TDLPRDSSTS…NKTAEKTETL (85 aa)). Residues 331-351 (VRAEKEEKYEVQEERSQENHL) are compositionally biased toward basic and acidic residues. The segment covering 352 to 371 (DSSNQRILQQEPDSVPSTNK) has biased composition (polar residues).

The polypeptide is Protein TRM32 (TRM32) (Arabidopsis thaliana (Mouse-ear cress)).